Consider the following 435-residue polypeptide: GTPase Der (435 aa).

2 EngA-type G domains span residues 4-167 (KIVA…SKND) and 175-350 (TKIA…QSLS). GTP is bound by residues 10–17 (GKPNVGKS), 57–61 (DTGGI), 119–122 (NKYD), 181–188 (GKPNVGKS), 228–232 (DTAGI), and 293–296 (NKWD). Residues 351–435 (VKVKTYVLNE…PINLIFRERK (85 aa)) form the KH-like domain.

It belongs to the TRAFAC class TrmE-Era-EngA-EngB-Septin-like GTPase superfamily. EngA (Der) GTPase family. Associates with the 50S ribosomal subunit.

In terms of biological role, GTPase that plays an essential role in the late steps of ribosome biogenesis. The sequence is that of GTPase Der from Mycoplasma capricolum subsp. capricolum (strain California kid / ATCC 27343 / NCTC 10154).